Consider the following 475-residue polypeptide: Glutamate--tRNA ligase 1 (475 aa).

The 'HIGH' region motif lies at 11–21; the sequence is PSPTGYLHIGG. The 'KMSKS' region signature appears at 240–244; it reads KLSKR. Lysine 243 lines the ATP pocket.

Belongs to the class-I aminoacyl-tRNA synthetase family. Glutamate--tRNA ligase type 1 subfamily. Monomer.

The protein localises to the cytoplasm. It carries out the reaction tRNA(Glu) + L-glutamate + ATP = L-glutamyl-tRNA(Glu) + AMP + diphosphate. Its function is as follows. Catalyzes the attachment of glutamate to tRNA(Glu) in a two-step reaction: glutamate is first activated by ATP to form Glu-AMP and then transferred to the acceptor end of tRNA(Glu). In Methylobacterium radiotolerans (strain ATCC 27329 / DSM 1819 / JCM 2831 / NBRC 15690 / NCIMB 10815 / 0-1), this protein is Glutamate--tRNA ligase 1.